The chain runs to 66 residues: Putative alpha-neurotoxin RjAa13 (66 aa).

The 60-residue stretch at Lys-1–Arg-60 folds into the LCN-type CS-alpha/beta domain. 4 cysteine pairs are disulfide-bonded: Cys-11-Cys-59, Cys-15-Cys-35, Cys-21-Cys-42, and Cys-25-Cys-44.

It belongs to the long (4 C-C) scorpion toxin superfamily. Sodium channel inhibitor family. Alpha subfamily. As to expression, expressed by the venom gland.

The protein resides in the secreted. In terms of biological role, alpha toxins bind voltage-independently at site-3 of sodium channels (Nav) and inhibits the inactivation of the activated channels, thereby blocking neuronal transmission. The chain is Putative alpha-neurotoxin RjAa13 from Rhopalurus junceus (Caribbean blue scorpion).